The following is a 678-amino-acid chain: Methionine--tRNA ligase (678 aa).

The short motif at 14–24 (PYANGSIHLGH) is the 'HIGH' region element. Zn(2+)-binding residues include Cys145, Cys148, Cys158, and Cys161. The 'KMSKS' region motif lies at 331-335 (KMSKS). Residue Lys334 coordinates ATP. Residues 576–678 (AFAAVDLRIA…SGAKPGQRVK (103 aa)) form the tRNA-binding domain.

It belongs to the class-I aminoacyl-tRNA synthetase family. MetG type 1 subfamily. Homodimer. The cofactor is Zn(2+).

The protein resides in the cytoplasm. It catalyses the reaction tRNA(Met) + L-methionine + ATP = L-methionyl-tRNA(Met) + AMP + diphosphate. In terms of biological role, is required not only for elongation of protein synthesis but also for the initiation of all mRNA translation through initiator tRNA(fMet) aminoacylation. The protein is Methionine--tRNA ligase of Pseudomonas aeruginosa (strain UCBPP-PA14).